Here is a 59-residue protein sequence, read N- to C-terminus: Large ribosomal subunit protein bL32 (59 aa).

Belongs to the bacterial ribosomal protein bL32 family.

In Anaeromyxobacter dehalogenans (strain 2CP-C), this protein is Large ribosomal subunit protein bL32.